Reading from the N-terminus, the 328-residue chain is 4-hydroxythreonine-4-phosphate dehydrogenase (328 aa).

The substrate site is built by His135 and Thr136. His165, His210, and His265 together coordinate a divalent metal cation. Substrate-binding residues include Lys273, Asn282, and Arg291.

It belongs to the PdxA family. As to quaternary structure, homodimer. Requires Zn(2+) as cofactor. Mg(2+) serves as cofactor. It depends on Co(2+) as a cofactor.

The protein localises to the cytoplasm. It catalyses the reaction 4-(phosphooxy)-L-threonine + NAD(+) = 3-amino-2-oxopropyl phosphate + CO2 + NADH. It participates in cofactor biosynthesis; pyridoxine 5'-phosphate biosynthesis; pyridoxine 5'-phosphate from D-erythrose 4-phosphate: step 4/5. Catalyzes the NAD(P)-dependent oxidation of 4-(phosphooxy)-L-threonine (HTP) into 2-amino-3-oxo-4-(phosphooxy)butyric acid which spontaneously decarboxylates to form 3-amino-2-oxopropyl phosphate (AHAP). This is 4-hydroxythreonine-4-phosphate dehydrogenase from Pseudomonas aeruginosa (strain ATCC 15692 / DSM 22644 / CIP 104116 / JCM 14847 / LMG 12228 / 1C / PRS 101 / PAO1).